The following is a 131-amino-acid chain: Histone H3-like 4 (131 aa).

Lysine 10 is subject to N6,N6,N6-trimethyllysine; alternate. Lysine 10 carries the N6,N6-dimethyllysine; alternate modification. At lysine 10 the chain carries N6-acetyllysine; alternate. Lysine 10 is modified (N6-methyllysine; alternate). Threonine 12 is subject to Phosphothreonine. N6-acetyllysine is present on lysine 15. The residue at position 27 (serine 27) is a Phosphoserine. Lysine 32 carries the post-translational modification N6,N6,N6-trimethyllysine; alternate. Position 32 is an N6,N6-dimethyllysine; alternate (lysine 32). Lysine 32 carries the post-translational modification N6-methyllysine; alternate.

Belongs to the histone H3 family. In terms of assembly, the nucleosome is a histone octamer containing two molecules each of H2A, H2B, H3 and H4 assembled in one H3-H4 heterotetramer and two H2A-H2B heterodimers. The octamer wraps approximately 147 bp of DNA. As to expression, expressed in roots, seedlings, leaves buds and open flowers.

The protein resides in the nucleus. The protein localises to the chromosome. In terms of biological role, core component of nucleosome. Nucleosomes wrap and compact DNA into chromatin, limiting DNA accessibility to the cellular machineries which require DNA as a template. Histones thereby play a central role in transcription regulation, DNA repair, DNA replication and chromosomal stability. DNA accessibility is regulated via a complex set of post-translational modifications of histones, also called histone code, and nucleosome remodeling. This Arabidopsis thaliana (Mouse-ear cress) protein is Histone H3-like 4.